The primary structure comprises 380 residues: MNKFTQHLQQLAEIGQKRQLPDIEHQGKFVIARDLTMLNLSSNDYLGLANDAQQVERFLQSIGKNQPLTSSSSRLLTGNFPIYQDFETLLAQRFQRESALLFNSGYHANIGILPAVADKQTLILADKLAHASLIDGIRLSGADFFRYKHNDYLHLEQLLQTHSERYQQVIIVTESVFSMDGDIADLQQLVALKKRYTNVLLYVDEAHAIGVYGQQGLGMAEVFDCIQEIDFLVGTFGKALASMGAYLVCDSEIREYLINTMRPLIFSTALPPINVAWTYFLFEQLPQFTEKRHHLEKLSQILRTEVTKRSEFPLLSETCIVPYILGENQQAVEKADYLQKQGYYCLPIRPPTVPKGTARLRFSLTADLTEQDIMGLISCL.

Position 18 (Arg18) interacts with substrate. 105–106 serves as a coordination point for pyridoxal 5'-phosphate; sequence GY. Substrate is bound at residue His130. Pyridoxal 5'-phosphate is bound by residues Ser178, 204 to 207, and 235 to 238; these read DEAH and TFGK. Residue Lys238 is modified to N6-(pyridoxal phosphate)lysine. Thr352 serves as a coordination point for substrate.

Belongs to the class-II pyridoxal-phosphate-dependent aminotransferase family. BioF subfamily. As to quaternary structure, homodimer. Pyridoxal 5'-phosphate serves as cofactor.

The catalysed reaction is 6-carboxyhexanoyl-[ACP] + L-alanine + H(+) = (8S)-8-amino-7-oxononanoate + holo-[ACP] + CO2. The protein operates within cofactor biosynthesis; biotin biosynthesis. Functionally, catalyzes the decarboxylative condensation of pimeloyl-[acyl-carrier protein] and L-alanine to produce 8-amino-7-oxononanoate (AON), [acyl-carrier protein], and carbon dioxide. In Glaesserella parasuis serovar 5 (strain SH0165) (Haemophilus parasuis), this protein is Putative 8-amino-7-oxononanoate synthase (bioF).